An 845-amino-acid polypeptide reads, in one-letter code: Translation initiation factor IF-2 (845 aa).

2 disordered regions span residues lysine 44–serine 91 and alanine 119–proline 256. The span at alanine 119–leucine 129 shows a compositional bias: basic and acidic residues. A compositionally biased stretch (acidic residues) spans aspartate 139–proline 148. Residues serine 156–glutamate 165 are compositionally biased toward polar residues. 2 stretches are compositionally biased toward basic and acidic residues: residues isoleucine 179–serine 194 and serine 202–arginine 217. Residues leucine 343 to aspartate 510 form the tr-type G domain. The tract at residues glycine 352 to threonine 359 is G1. Glycine 352–threonine 359 serves as a coordination point for GTP. The G2 stretch occupies residues glycine 377–histidine 381. Positions aspartate 398–glycine 401 are G3. GTP-binding positions include aspartate 398 to histidine 402 and asparagine 452 to aspartate 455. The segment at asparagine 452–aspartate 455 is G4. Positions serine 488–lysine 490 are G5.

This sequence belongs to the TRAFAC class translation factor GTPase superfamily. Classic translation factor GTPase family. IF-2 subfamily.

It localises to the cytoplasm. In terms of biological role, one of the essential components for the initiation of protein synthesis. Protects formylmethionyl-tRNA from spontaneous hydrolysis and promotes its binding to the 30S ribosomal subunits. Also involved in the hydrolysis of GTP during the formation of the 70S ribosomal complex. The sequence is that of Translation initiation factor IF-2 from Bartonella henselae (strain ATCC 49882 / DSM 28221 / CCUG 30454 / Houston 1) (Rochalimaea henselae).